A 47-amino-acid polypeptide reads, in one-letter code: Heat shock protein HSP 90 (47 aa).

It belongs to the heat shock protein 90 family. As to quaternary structure, homodimer.

Its subcellular location is the cytoplasm. Functionally, putative molecular chaperone that may promote the maturation, structural maintenance and proper regulation of specific target proteins. The chain is Heat shock protein HSP 90 from Oryctolagus cuniculus (Rabbit).